A 1079-amino-acid polypeptide reads, in one-letter code: DNA ligase 4 (1079 aa).

A disordered region spans residues 1-20; that stretch reads MAVHAPYNHAPPPTQEINGQ. Residues E295, K297, L298, R302, E357, F395, E460, K465, K482, and K484 each contribute to the ATP site. K297 acts as the N6-AMP-lysine intermediate in catalysis. E357 contributes to the Mg(2+) binding site. E460 contributes to the Mg(2+) binding site. A BRCT 1 domain is found at 699–789; that stretch reads VETSIFSDMT…TALPFLKEFL (91 aa). The segment covering 838–847 has biased composition (acidic residues); that stretch reads DGEDKDEIDV. The disordered stretch occupies residues 838-942; that stretch reads DGEDKDEIDV…SDVGVNGDDY (105 aa). Basic and acidic residues-rich tracts occupy residues 848–878 and 900–914; these read EESRESKNRRMAREDLKEKESNRTLEQKKLQ and MSLKEESDTDSERSR. The BRCT 2 domain maps to 968–1078; that stretch reads DEDRIFYHLA…TLLDEDLYKP (111 aa).

Belongs to the ATP-dependent DNA ligase family. Mg(2+) is required as a cofactor.

The protein resides in the nucleus. It carries out the reaction ATP + (deoxyribonucleotide)n-3'-hydroxyl + 5'-phospho-(deoxyribonucleotide)m = (deoxyribonucleotide)n+m + AMP + diphosphate.. DNA ligase involved in DNA non-homologous end joining (NHEJ); required for double-strand break (DSB) repair. This is DNA ligase 4 (LIG4) from Cryptococcus neoformans var. neoformans serotype D (strain JEC21 / ATCC MYA-565) (Filobasidiella neoformans).